A 203-amino-acid polypeptide reads, in one-letter code: Leucyl/phenylalanyl-tRNA--protein transferase (203 aa).

This sequence belongs to the L/F-transferase family.

It localises to the cytoplasm. It carries out the reaction N-terminal L-lysyl-[protein] + L-leucyl-tRNA(Leu) = N-terminal L-leucyl-L-lysyl-[protein] + tRNA(Leu) + H(+). It catalyses the reaction N-terminal L-arginyl-[protein] + L-leucyl-tRNA(Leu) = N-terminal L-leucyl-L-arginyl-[protein] + tRNA(Leu) + H(+). The enzyme catalyses L-phenylalanyl-tRNA(Phe) + an N-terminal L-alpha-aminoacyl-[protein] = an N-terminal L-phenylalanyl-L-alpha-aminoacyl-[protein] + tRNA(Phe). Its function is as follows. Functions in the N-end rule pathway of protein degradation where it conjugates Leu, Phe and, less efficiently, Met from aminoacyl-tRNAs to the N-termini of proteins containing an N-terminal arginine or lysine. This Chelativorans sp. (strain BNC1) protein is Leucyl/phenylalanyl-tRNA--protein transferase.